Consider the following 190-residue polypeptide: MEVILLERVAKLGQMGETVNVRPGFARNFLLARGKALRATEANKKHFEAQRAQLEARNLDRKKDAEVVAEKLNGQSFILIRQSGETGVLYGSVSTRDLAEVVSKEGFTVDRGQFTLNQPIKTLGLHTVPVVLHPEVEVEITVNVARSPEEAERQARGESVTEREAFNLDDLGLEVGQALADAGEGADDRG.

Belongs to the bacterial ribosomal protein bL9 family.

Its function is as follows. Binds to the 23S rRNA. The protein is Large ribosomal subunit protein bL9 of Methylobacterium radiotolerans (strain ATCC 27329 / DSM 1819 / JCM 2831 / NBRC 15690 / NCIMB 10815 / 0-1).